Reading from the N-terminus, the 226-residue chain is Leucyl/phenylalanyl-tRNA--protein transferase (226 aa).

The protein belongs to the L/F-transferase family.

It is found in the cytoplasm. The catalysed reaction is N-terminal L-lysyl-[protein] + L-leucyl-tRNA(Leu) = N-terminal L-leucyl-L-lysyl-[protein] + tRNA(Leu) + H(+). It carries out the reaction N-terminal L-arginyl-[protein] + L-leucyl-tRNA(Leu) = N-terminal L-leucyl-L-arginyl-[protein] + tRNA(Leu) + H(+). It catalyses the reaction L-phenylalanyl-tRNA(Phe) + an N-terminal L-alpha-aminoacyl-[protein] = an N-terminal L-phenylalanyl-L-alpha-aminoacyl-[protein] + tRNA(Phe). In terms of biological role, functions in the N-end rule pathway of protein degradation where it conjugates Leu, Phe and, less efficiently, Met from aminoacyl-tRNAs to the N-termini of proteins containing an N-terminal arginine or lysine. In Pseudomonas putida (strain ATCC 47054 / DSM 6125 / CFBP 8728 / NCIMB 11950 / KT2440), this protein is Leucyl/phenylalanyl-tRNA--protein transferase.